Consider the following 189-residue polypeptide: GTP cyclohydrolase 1 (189 aa).

Zn(2+) contacts are provided by Cys79, His82, and Cys150.

This sequence belongs to the GTP cyclohydrolase I family. In terms of assembly, toroid-shaped homodecamer, composed of two pentamers of five dimers.

It catalyses the reaction GTP + H2O = 7,8-dihydroneopterin 3'-triphosphate + formate + H(+). It functions in the pathway cofactor biosynthesis; 7,8-dihydroneopterin triphosphate biosynthesis; 7,8-dihydroneopterin triphosphate from GTP: step 1/1. The protein is GTP cyclohydrolase 1 of Rickettsia massiliae (strain Mtu5).